We begin with the raw amino-acid sequence, 420 residues long: O-methyltransferase opaF (420 aa).

S-adenosyl-L-methionine contacts are provided by residues 262–263 (GG), aspartate 287, and 308–309 (DL). Histidine 328 functions as the Proton acceptor in the catalytic mechanism.

Belongs to the class I-like SAM-binding methyltransferase superfamily. Cation-independent O-methyltransferase family.

It functions in the pathway secondary metabolite biosynthesis. O-methyltransferase; part of the gene cluster that mediates the biosynthesis of oxepinamides, derivatives of anthranilyl-containing tripeptides that share an oxepin ring and a fused pyrimidinone moiety. The nonribosomal peptide synthetase (NRPS) opaA assembles the quinazolinone core with D-Phe incorporation. The first adenylation domain (A1) of opaA loads and activates anthranilic acid whereas the second A domain (A2) is for activating of L-Phe, which is then converted to D-form by the E domain. The third A domain (A3) is responsible for L-Ile activation and the terminal condensation domain C3 for cyclization and releasing the NRPS product protuboxepin K. The cytochrome P450 monooxygenase opaB then catalyzes alone the oxepin ring formation to convert protuboxepin K into protuboxepin A. The flavoenzyme opaC installs subsequently one hydroxyl group at the oxepin ring, accompanied by double bond migration, to form 15-epi-oxepinamide E. The epimerase opaE changes the D-Phe residue back to L-form, leading to oxepinamide E, which is further methylated at the hydroxyl group at C-12 by the O-methyltransferase OpaF to yield oxepinamide F. The protein is O-methyltransferase opaF of Aspergillus ustus.